The sequence spans 448 residues: uncharacterized protein (448 aa).

Polar residues predominate over residues 428–440; that stretch reads PFKTDCDPNNDND. Residues 428 to 448 are disordered; sequence PFKTDCDPNNDNDLTPPAVFG.

This is an uncharacterized protein from Mycoplasma pneumoniae (strain ATCC 29342 / M129 / Subtype 1) (Mycoplasmoides pneumoniae).